The chain runs to 775 residues: MDEDGNLQISNSNYNGEEEGEDPENNTLNQPLLKRHRTLSSTPLALVGAKVSHIESLDYEINENDLFKHDWRSRSKAQVFQYIFLKWTLACLVGLFTGLIATLINLAVENIAGYKLLAVGYYIAQDRFWTGLMVFTGANLGLTLVATVLVVYFAPTAAGPGIPEIKAYLNGIDTPNMFGFTTMMVKIVGSIGAVAAGLDLGKEGPLVHIGSCIASLLGQGGPDNHRIKWRWLRYFNNDRDRRDLITCGSASGVCAAFRSPVGGVLFALEEVATWWRSALLWRTFFSTAVVVVVLRAFIEICNSGKCGLFGSGGLIMFDVSHVEVRYHAADIIPVTLIGVFGGILGSLYNHLLHKVLRLYNLINQKGKIHKVLLSLGVSLFTSVCLFGLPFLAECKPCDPSIDEICPTNGRSGNFKQFNCPNGYYNDLSTLLLTTNDDAVRNIFSSNTPNEFGMVSLWIFFGLYCILGLITFGIATPSGLFLPIILMGSAYGRMLGTAMGSYTNIDQGLYAVLGAASLMAGSMRMTVSLCVIFLELTNNLLLLPITMFVLLIAKTVGDSFNLSIYEIILHLKGLPFLEANPEPWMRNLTVGELNDAKPPVVTLNGVEKVANIVDVLRNTTHNAFPVLDGADQNTGTELHGLILRAHLVKVLKKRWFLNEKRRTEEWEVREKFTPVELAEREDNFDDVAITSSEMQLYVDLHPLTNTTPYTVVQSMSVAKALVLFRSVGLRHLLVVPKIQASGMSPVIGILTRQDLRAYNILQAFPHLDKHKSGKAR.

The segment at 1 to 28 is disordered; sequence MDEDGNLQISNSNYNGEEEGEDPENNTL. 12 consecutive transmembrane segments (helical) span residues 88–108, 131–151, 178–198, 206–226, 248–268, 278–298, 328–348, 371–391, 453–473, 478–498, 510–530, and 531–551; these read TLACLVGLFTGLIATLINLAV, GLMVFTGANLGLTLVATVLVV, FGFTTMMVKIVGSIGAVAAGL, LVHIGSCIASLLGQGGPDNHR, GSASGVCAAFRSPVGGVLFAL, ALLWRTFFSTAVVVVVLRAFI, AADIIPVTLIGVFGGILGSLY, VLLSLGVSLFTSVCLFGLPFL, MVSLWIFFGLYCILGLITFGI, GLFLPIILMGSAYGRMLGTAM, AVLGAASLMAGSMRMTVSLCV, and IFLELTNNLLLLPITMFVLLI. CBS domains are found at residues 595–658 and 703–768; these read AKPP…FLNE and TNTT…HLDK. A helical transmembrane segment spans residues 730 to 750; the sequence is HLLVVPKIQASGMSPVIGILT.

It belongs to the chloride channel (TC 2.A.49) family. In terms of assembly, homodimer. Interacts with PP2A5. In terms of tissue distribution, broadly expressed in the plant.

Its subcellular location is the membrane. Voltage-gated chloride channel that could play a role in the regulation of nitrate content. The chain is Chloride channel protein CLC-a (CLC-A) from Arabidopsis thaliana (Mouse-ear cress).